The following is an 86-amino-acid chain: Small ribosomal subunit protein bS18 (86 aa).

The protein belongs to the bacterial ribosomal protein bS18 family. Part of the 30S ribosomal subunit. Forms a tight heterodimer with protein bS6.

Binds as a heterodimer with protein bS6 to the central domain of the 16S rRNA, where it helps stabilize the platform of the 30S subunit. This Campylobacter lari (strain RM2100 / D67 / ATCC BAA-1060) protein is Small ribosomal subunit protein bS18.